The primary structure comprises 142 residues: U1 small nuclear ribonucleoprotein C (142 aa).

A Matrin-type zinc finger spans residues Tyr-4–Met-36.

The protein belongs to the U1 small nuclear ribonucleoprotein C family. U1 snRNP is composed of the 7 core Sm proteins B/B', D1, D2, D3, E, F and G that assemble in a heptameric protein ring on the Sm site of the small nuclear RNA to form the core snRNP, and at least 3 U1 snRNP-specific proteins U1-70K, U1-A and U1-C. U1-C interacts with U1 snRNA and the 5' splice-site region of the pre-mRNA.

The protein resides in the nucleus. Component of the spliceosomal U1 snRNP, which is essential for recognition of the pre-mRNA 5' splice-site and the subsequent assembly of the spliceosome. U1-C is directly involved in initial 5' splice-site recognition for both constitutive and regulated alternative splicing. The interaction with the 5' splice-site seems to precede base-pairing between the pre-mRNA and the U1 snRNA. Stimulates commitment or early (E) complex formation by stabilizing the base pairing of the 5' end of the U1 snRNA and the 5' splice-site region. The sequence is that of U1 small nuclear ribonucleoprotein C from Caenorhabditis elegans.